The following is a 294-amino-acid chain: N-acetylmuramic acid 6-phosphate etherase (294 aa).

Positions 56–219 (TSYSLRNGGR…STLSMVSVGK (164 aa)) constitute an SIS domain. The active-site Proton donor is the glutamate 84. The active site involves glutamate 115.

The protein belongs to the GCKR-like family. MurNAc-6-P etherase subfamily. As to quaternary structure, homodimer.

It carries out the reaction N-acetyl-D-muramate 6-phosphate + H2O = N-acetyl-D-glucosamine 6-phosphate + (R)-lactate. Its pathway is amino-sugar metabolism; 1,6-anhydro-N-acetylmuramate degradation. It participates in amino-sugar metabolism; N-acetylmuramate degradation. It functions in the pathway cell wall biogenesis; peptidoglycan recycling. Its function is as follows. Specifically catalyzes the cleavage of the D-lactyl ether substituent of MurNAc 6-phosphate, producing GlcNAc 6-phosphate and D-lactate. Together with AnmK, is also required for the utilization of anhydro-N-acetylmuramic acid (anhMurNAc) either imported from the medium or derived from its own cell wall murein, and thus plays a role in cell wall recycling. In Francisella tularensis subsp. tularensis (strain SCHU S4 / Schu 4), this protein is N-acetylmuramic acid 6-phosphate etherase.